The primary structure comprises 555 residues: Cytochrome P450 78A11 (555 aa).

Residues 12-32 (VDATWWAYALPALLGADTLCA) form a helical membrane-spanning segment. Position 495 (Cys-495) interacts with heme.

Belongs to the cytochrome P450 family. It depends on heme as a cofactor. In terms of tissue distribution, expressed in seedlings, shoot apices and young panicles, but not in mature leaves, calli and roots.

The protein localises to the membrane. Its function is as follows. Involved in the regular timing (plastochron) of lateral organs formation. May regulate the rate of leaf initiation and the duration of vegetative phase. Seems to be redundant to the function of PLASTOCHRON2, but to act in an independent pathway. This chain is Cytochrome P450 78A11 (CYP78A11), found in Oryza sativa subsp. japonica (Rice).